Reading from the N-terminus, the 441-residue chain is Histidinol dehydrogenase (441 aa).

The NAD(+) site is built by tyrosine 136, glutamine 197, and asparagine 220. 3 residues coordinate substrate: serine 243, glutamine 265, and histidine 268. Positions 265 and 268 each coordinate Zn(2+). Active-site proton acceptor residues include glutamate 333 and histidine 334. Substrate is bound by residues histidine 334, aspartate 367, glutamate 421, and histidine 426. Aspartate 367 is a Zn(2+) binding site. A Zn(2+)-binding site is contributed by histidine 426.

The protein belongs to the histidinol dehydrogenase family. The cofactor is Zn(2+).

It catalyses the reaction L-histidinol + 2 NAD(+) + H2O = L-histidine + 2 NADH + 3 H(+). It functions in the pathway amino-acid biosynthesis; L-histidine biosynthesis; L-histidine from 5-phospho-alpha-D-ribose 1-diphosphate: step 9/9. Catalyzes the sequential NAD-dependent oxidations of L-histidinol to L-histidinaldehyde and then to L-histidine. The chain is Histidinol dehydrogenase from Pseudomonas putida (strain ATCC 47054 / DSM 6125 / CFBP 8728 / NCIMB 11950 / KT2440).